The chain runs to 522 residues: Glucans biosynthesis protein G (522 aa).

Positions 1–33 are cleaved as a signal peptide; the sequence is MLDNKFGFKQRVASLRWLSAAIMLSVSAVPAWA.

This sequence belongs to the OpgD/OpgG family.

It localises to the periplasm. The protein operates within glycan metabolism; osmoregulated periplasmic glucan (OPG) biosynthesis. Involved in the biosynthesis of osmoregulated periplasmic glucans (OPGs). This is Glucans biosynthesis protein G from Pectobacterium carotovorum subsp. carotovorum (strain PC1).